We begin with the raw amino-acid sequence, 1405 residues long: DNA-directed RNA polymerase subunit beta' (1405 aa).

Positions 70, 72, 85, and 88 each coordinate Zn(2+). Residues Asp460, Asp462, and Asp464 each contribute to the Mg(2+) site. 4 residues coordinate Zn(2+): Cys814, Cys888, Cys895, and Cys898.

This sequence belongs to the RNA polymerase beta' chain family. The RNAP catalytic core consists of 2 alpha, 1 beta, 1 beta' and 1 omega subunit. When a sigma factor is associated with the core the holoenzyme is formed, which can initiate transcription. Mg(2+) is required as a cofactor. It depends on Zn(2+) as a cofactor.

The enzyme catalyses RNA(n) + a ribonucleoside 5'-triphosphate = RNA(n+1) + diphosphate. Functionally, DNA-dependent RNA polymerase catalyzes the transcription of DNA into RNA using the four ribonucleoside triphosphates as substrates. The sequence is that of DNA-directed RNA polymerase subunit beta' from Shewanella baltica (strain OS223).